A 239-amino-acid polypeptide reads, in one-letter code: Purine nucleoside phosphorylase DeoD-type (239 aa).

Residue histidine 5 coordinates a purine D-ribonucleoside. Phosphate is bound by residues glycine 21, arginine 25, arginine 44, and 88 to 91; that span reads RVGS. A purine D-ribonucleoside-binding positions include 180–182 and 204–205; these read EME and SD. The active-site Proton donor is the aspartate 205.

The protein belongs to the PNP/UDP phosphorylase family. Homohexamer; trimer of homodimers.

It catalyses the reaction a purine D-ribonucleoside + phosphate = a purine nucleobase + alpha-D-ribose 1-phosphate. The catalysed reaction is a purine 2'-deoxy-D-ribonucleoside + phosphate = a purine nucleobase + 2-deoxy-alpha-D-ribose 1-phosphate. Functionally, catalyzes the reversible phosphorolytic breakdown of the N-glycosidic bond in the beta-(deoxy)ribonucleoside molecules, with the formation of the corresponding free purine bases and pentose-1-phosphate. In Myxococcus xanthus (strain DK1622), this protein is Purine nucleoside phosphorylase DeoD-type.